The sequence spans 458 residues: Bifunctional protein GlmU (458 aa).

Residues Met1 to Arg231 are pyrophosphorylase. Residues Leu11–Gly14, Lys25, Gln78, Gly83–Thr84, Tyr105–Asp107, Gly142, Glu156, Asn171, and Asn229 each bind UDP-N-acetyl-alpha-D-glucosamine. Position 107 (Asp107) interacts with Mg(2+). A Mg(2+)-binding site is contributed by Asn229. The linker stretch occupies residues Leu232 to Ala252. An N-acetyltransferase region spans residues Gly253–Lys458. 2 residues coordinate UDP-N-acetyl-alpha-D-glucosamine: Arg335 and Lys353. The active-site Proton acceptor is the His365. The UDP-N-acetyl-alpha-D-glucosamine site is built by Tyr368 and Asn379. Acetyl-CoA contacts are provided by residues Ala382, Asn388–Tyr389, Ser407, Ala425, and Arg442.

The protein in the N-terminal section; belongs to the N-acetylglucosamine-1-phosphate uridyltransferase family. It in the C-terminal section; belongs to the transferase hexapeptide repeat family. Homotrimer. Requires Mg(2+) as cofactor.

It is found in the cytoplasm. It carries out the reaction alpha-D-glucosamine 1-phosphate + acetyl-CoA = N-acetyl-alpha-D-glucosamine 1-phosphate + CoA + H(+). The enzyme catalyses N-acetyl-alpha-D-glucosamine 1-phosphate + UTP + H(+) = UDP-N-acetyl-alpha-D-glucosamine + diphosphate. Its pathway is nucleotide-sugar biosynthesis; UDP-N-acetyl-alpha-D-glucosamine biosynthesis; N-acetyl-alpha-D-glucosamine 1-phosphate from alpha-D-glucosamine 6-phosphate (route II): step 2/2. It functions in the pathway nucleotide-sugar biosynthesis; UDP-N-acetyl-alpha-D-glucosamine biosynthesis; UDP-N-acetyl-alpha-D-glucosamine from N-acetyl-alpha-D-glucosamine 1-phosphate: step 1/1. The protein operates within bacterial outer membrane biogenesis; LPS lipid A biosynthesis. Functionally, catalyzes the last two sequential reactions in the de novo biosynthetic pathway for UDP-N-acetylglucosamine (UDP-GlcNAc). The C-terminal domain catalyzes the transfer of acetyl group from acetyl coenzyme A to glucosamine-1-phosphate (GlcN-1-P) to produce N-acetylglucosamine-1-phosphate (GlcNAc-1-P), which is converted into UDP-GlcNAc by the transfer of uridine 5-monophosphate (from uridine 5-triphosphate), a reaction catalyzed by the N-terminal domain. The sequence is that of Bifunctional protein GlmU from Sodalis glossinidius (strain morsitans).